The following is a 201-amino-acid chain: Small ribosomal subunit protein uS4c (201 aa).

The 64-residue stretch at 89–152 (MRLDNILFRL…NSRTLVQNLI (64 aa)) folds into the S4 RNA-binding domain.

Belongs to the universal ribosomal protein uS4 family. As to quaternary structure, part of the 30S ribosomal subunit. Contacts protein S5. The interaction surface between S4 and S5 is involved in control of translational fidelity.

It localises to the plastid. It is found in the chloroplast. One of the primary rRNA binding proteins, it binds directly to 16S rRNA where it nucleates assembly of the body of the 30S subunit. Its function is as follows. With S5 and S12 plays an important role in translational accuracy. The protein is Small ribosomal subunit protein uS4c (rps4) of Crucihimalaya wallichii (Rock-cress).